The chain runs to 778 residues: Kin of IRRE-like protein 3 (778 aa).

The first 21 residues, 1 to 21 (MKPFQLDLLFVCFFLFSQELG), serve as a signal peptide directing secretion. The Extracellular portion of the chain corresponds to 22-535 (LQKRGCCLVL…GLEAESVPMA (514 aa)). Ig-like C2-type domains lie at 48 to 142 (YSFS…ARLT), 147 to 243 (PDDP…TSVT), 249 to 330 (PPLV…RTVD), 335 to 415 (PRMT…VTLT), and 419 to 515 (PPII…IRLK). A disulfide bond links C69 and C127. A glycan (N-linked (GlcNAc...) asparagine) is linked at N167. An intrachain disulfide couples C170 to C227. N253 is a glycosylation site (N-linked (GlcNAc...) asparagine). C271 and C314 form a disulfide bridge. The N-linked (GlcNAc...) asparagine glycan is linked to N324. 2 disulfide bridges follow: C356-C398 and C440-C499. The N-linked (GlcNAc...) asparagine glycan is linked to N498. A helical membrane pass occupies residues 536 to 556 (VIIGVAVGAGVAFLVLMATIV). Residues 557–778 (AFCCARSQRN…PLQRRMQTHV (222 aa)) are Cytoplasmic-facing. The span at 727 to 736 (CDSSVSSSGK) shows a compositional bias: polar residues. The disordered stretch occupies residues 727-778 (CDSSVSSSGKQDGYVQFDKASKASASSSHHSQSSSQNSDPSRPLQRRMQTHV). A compositionally biased stretch (low complexity) spans 748–762 (KASASSSHHSQSSSQ).

Belongs to the immunoglobulin superfamily. As to quaternary structure, homodimer; mediates homophilic interactions to promote cell adhesion. Interacts with NPHS1; forms heterodimers with NPHS1. Interacts with NPHS2/podocin (via the C-terminus). Interacts with CASK. Interacts (via extracellular region) with MAP1B. Interacts (via extracellular region) with MYO16. Interacts (via intracellular region) with ATP1B1. Interacts (via intracellular region) with SHMT2. Interacts (via intracellular region) with UFC1. Post-translationally, undergoes proteolysis by a metalloprotease and gives rise to a soluble form. In terms of tissue distribution, expressed in fetal and adult brain. Also expressed in kidney, specifically in podocytes of kidney glomeruli. Also expressed in skeletal muscle.

The protein localises to the cell membrane. It localises to the secreted. Its function is as follows. Synaptic adhesion molecule required for the formation of target-specific synapses. Required for formation of target-specific synapses at hippocampal mossy fiber synapses. Required for formation of mossy fiber filopodia, the synaptic structures connecting dentate granule and GABA neurons. Probably acts as a homophilic adhesion molecule that promotes trans-cellular interactions and stabilize mossy fiber filipodia contact and subsequent synapse formation. Required for the coalescence of vomeronasal sensory neuron axons. May be involved in the hematopoietic supportive capacity of stroma cells; the secreted extracellular domain is directly responsible for supporting hematopoietic stem cells. The sequence is that of Kin of IRRE-like protein 3 from Homo sapiens (Human).